Consider the following 58-residue polypeptide: Large ribosomal subunit protein uL30 (58 aa).

This sequence belongs to the universal ribosomal protein uL30 family. Part of the 50S ribosomal subunit.

This is Large ribosomal subunit protein uL30 from Parabacteroides distasonis (strain ATCC 8503 / DSM 20701 / CIP 104284 / JCM 5825 / NCTC 11152).